A 72-amino-acid polypeptide reads, in one-letter code: Male-specific sperm protein Mst84Dd (72 aa).

This sequence belongs to the MST(3)CGP family. As to expression, testis.

In Drosophila melanogaster (Fruit fly), this protein is Male-specific sperm protein Mst84Dd (Mst84Dd).